The primary structure comprises 313 residues: Olfactory receptor 2B6 (313 aa).

Over 1–27 (MSWANESITGEFVLLGFSDQPWLEFPL) the chain is Extracellular. Asparagine 5 carries N-linked (GlcNAc...) asparagine glycosylation. The helical transmembrane segment at 28–48 (FVVFLTSYIVTIFGNLNIILV) threads the bilayer. Topologically, residues 49–57 (SHLDPKLHT) are cytoplasmic. Residues 58–78 (PMYFFLTNLSVIDLCYITCTV) form a helical membrane-spanning segment. Over 79 to 97 (PQMLVNLRSIRKVISFGGC) the chain is Extracellular. Cysteines 97 and 189 form a disulfide. The chain crosses the membrane as a helical span at residues 98–118 (VVQLFMFLALGATECVLLPVM). The Cytoplasmic portion of the chain corresponds to 119-143 (SFDRFVAICRPLHYSVIMHQRLCLQ). A helical transmembrane segment spans residues 144–164 (LAAVSWIIGFGNSVWLSILTL). Residues 165 to 200 (QLPRCGHYVIDHFLCEVPALLKLSCVDVTANEAELF) lie on the Extracellular side of the membrane. A helical transmembrane segment spans residues 201–221 (FVSVFFHLTPLSLILTSYAFI). Residues 222-244 (ARAILKIQSAEGRQKAFGTCSSH) are Cytoplasmic-facing. A helical transmembrane segment spans residues 245-265 (LIVVSLFYGTALSVYFLPPSP). The Extracellular portion of the chain corresponds to 266 to 271 (HSKNRR). The helical transmembrane segment at 272-292 (KMVPLFYGIIAPMLNPLIYTL) threads the bilayer. The Cytoplasmic portion of the chain corresponds to 293–313 (RNKEVKDAFKRLIKRVFLSKN).

The protein belongs to the G-protein coupled receptor 1 family.

Its subcellular location is the cell membrane. Functionally, odorant receptor. The sequence is that of Olfactory receptor 2B6 from Mus musculus (Mouse).